The chain runs to 1347 residues: Spermatogenesis-associated protein 31A7 (1347 aa).

A helical membrane pass occupies residues 23–43; it reads PWVLDIFLTLVFALGFFFLLL. Disordered stretches follow at residues 55 to 88, 106 to 233, 374 to 397, 628 to 658, 900 to 955, 1084 to 1161, and 1313 to 1335; these read PSPSPGKRKCPVGRRRRPRGRMKNHSLRAGRECP, GPHL…RDST, QDTTNPKPFWNMGENSKQLPGPQK, DESPGTSQAKGKPSPWQSSMSTGESSKEAQK, RGIP…REAV, VHEE…PSVS, and KAVSPVSPPQHWPKTSGASSHHH. A compositionally biased stretch (basic residues) spans 60–82; the sequence is GKRKCPVGRRRRPRGRMKNHSLR. Polar residues predominate over residues 165–178; that stretch reads LASTPSPGPMTTSV. The segment covering 198–211 has biased composition (pro residues); sequence PEPPALFPHPPHTP. Polar residues-rich tracts occupy residues 631–651 and 927–948; these read PGTSQAKGKPSPWQSSMSTGE and LTYSLTGSIQQSRSLGAQSSKA. 2 stretches are compositionally biased toward basic and acidic residues: residues 1108 to 1127 and 1137 to 1146; these read HKSEKSRKPNLEKHEERLEG and RKTEDTHQDE.

The protein belongs to the SPATA31 family.

The protein localises to the membrane. In terms of biological role, may play a role in spermatogenesis. This Homo sapiens (Human) protein is Spermatogenesis-associated protein 31A7.